Consider the following 337-residue polypeptide: GTP 3',8-cyclase (337 aa).

The region spanning 18–242 (NFGRRFHYLR…DKADILDGPA (225 aa)) is the Radical SAM core domain. Arg27 lines the GTP pocket. Cys34 and Cys38 together coordinate [4Fe-4S] cluster. Tyr40 provides a ligand contact to S-adenosyl-L-methionine. Cys41 contributes to the [4Fe-4S] cluster binding site. Arg76 contributes to the GTP binding site. Gly80 is a binding site for S-adenosyl-L-methionine. Residue Thr107 participates in GTP binding. An S-adenosyl-L-methionine-binding site is contributed by Ser131. Lys168 contributes to the GTP binding site. Met202 is an S-adenosyl-L-methionine binding site. 2 residues coordinate [4Fe-4S] cluster: Cys265 and Cys268. Residue 270-272 (RLR) participates in GTP binding. A [4Fe-4S] cluster-binding site is contributed by Cys282.

This sequence belongs to the radical SAM superfamily. MoaA family. Monomer and homodimer. Requires [4Fe-4S] cluster as cofactor.

The enzyme catalyses GTP + AH2 + S-adenosyl-L-methionine = (8S)-3',8-cyclo-7,8-dihydroguanosine 5'-triphosphate + 5'-deoxyadenosine + L-methionine + A + H(+). Its pathway is cofactor biosynthesis; molybdopterin biosynthesis. In terms of biological role, catalyzes the cyclization of GTP to (8S)-3',8-cyclo-7,8-dihydroguanosine 5'-triphosphate. The protein is GTP 3',8-cyclase of Shewanella denitrificans (strain OS217 / ATCC BAA-1090 / DSM 15013).